A 235-amino-acid chain; its full sequence is Cytidylate kinase (235 aa).

Gly11–Thr19 provides a ligand contact to ATP.

Belongs to the cytidylate kinase family. Type 1 subfamily.

Its subcellular location is the cytoplasm. The enzyme catalyses CMP + ATP = CDP + ADP. It catalyses the reaction dCMP + ATP = dCDP + ADP. The chain is Cytidylate kinase from Syntrophotalea carbinolica (strain DSM 2380 / NBRC 103641 / GraBd1) (Pelobacter carbinolicus).